The primary structure comprises 160 residues: Ribosomal RNA large subunit methyltransferase H (160 aa).

S-adenosyl-L-methionine contacts are provided by residues Leu-76, Gly-108, and 127-132; that span reads LGKMTW.

Belongs to the RNA methyltransferase RlmH family. In terms of assembly, homodimer.

It localises to the cytoplasm. It catalyses the reaction pseudouridine(1915) in 23S rRNA + S-adenosyl-L-methionine = N(3)-methylpseudouridine(1915) in 23S rRNA + S-adenosyl-L-homocysteine + H(+). Functionally, specifically methylates the pseudouridine at position 1915 (m3Psi1915) in 23S rRNA. The sequence is that of Ribosomal RNA large subunit methyltransferase H from Sinorhizobium medicae (strain WSM419) (Ensifer medicae).